Consider the following 932-residue polypeptide: DNA mismatch repair protein MutS (932 aa).

G615–S622 serves as a coordination point for ATP.

It belongs to the DNA mismatch repair MutS family.

Functionally, this protein is involved in the repair of mismatches in DNA. It is possible that it carries out the mismatch recognition step. This protein has a weak ATPase activity. This chain is DNA mismatch repair protein MutS, found in Clostridium botulinum (strain 657 / Type Ba4).